Reading from the N-terminus, the 122-residue chain is Basic phospholipase A2 F16 (122 aa).

Intrachain disulfides connect Cys-26–Cys-115, Cys-28–Cys-44, Cys-43–Cys-95, Cys-49–Cys-122, Cys-50–Cys-88, Cys-57–Cys-81, and Cys-75–Cys-86. Positions 27, 29, and 31 each coordinate Ca(2+). His-47 is an active-site residue. Asp-48 lines the Ca(2+) pocket. Residue Asp-89 is part of the active site.

This sequence belongs to the phospholipase A2 family. Group II subfamily. D49 sub-subfamily. Requires Ca(2+) as cofactor. In terms of tissue distribution, expressed by the venom gland.

The protein resides in the secreted. The catalysed reaction is a 1,2-diacyl-sn-glycero-3-phosphocholine + H2O = a 1-acyl-sn-glycero-3-phosphocholine + a fatty acid + H(+). Its activity is regulated as follows. Pre-incubation with heparin markedly reduces the neurotoxicity of this toxin. Its function is as follows. Snake venom phospholipase A2 (PLA2) that produces neuromuscular blockade in chick biventer cervicis preparations in the absence and presence of crotapotin. In contrast, in mouse phrenic nerve-diaphragm preparations, the neuromuscular blockade is dependent on crotapotin. PLA2 catalyzes the calcium-dependent hydrolysis of the 2-acyl groups in 3-sn-phosphoglycerides. This is Basic phospholipase A2 F16 from Crotalus durissus terrificus (South American rattlesnake).